A 195-amino-acid polypeptide reads, in one-letter code: PBAN-type neuropeptides (195 aa).

Residues 1–33 (MIGFAVFSSFNRFTTIFVCVLLCVVYLLSYASG) form the signal peptide. The propeptide occupies 34 to 63 (EYDGRDSSSGSNNDRAPSNEFGSCTDGKCI). At leucine 80 the chain carries Leucine amide. The propeptide occupies 86 to 117 (ADRKPEINSDIEAFANAFEEPHWAIVTIPETE). Glutamine 120 carries the post-translational modification Pyrrolidone carboxylic acid. Leucine 128 is modified (leucine amide). A propeptide spanning residues 131–153 (ESGEDYFSYGFPKDQEELYTEEQ) is cleaved from the precursor. A leucine amide mark is found at leucine 163 and leucine 175. Residues 178–195 (QLHNIVDKPRQNFNDPRF) constitute a propeptide that is removed on maturation.

This sequence belongs to the pyrokinin family.

The protein localises to the secreted. In terms of biological role, a hormone that controls sex pheromone production in females and pheromone responsiveness in male. Also mediates visceral muscle contractile activity (myotropic activity). This is PBAN-type neuropeptides from Apis mellifera (Honeybee).